A 156-amino-acid polypeptide reads, in one-letter code: Large ribosomal subunit protein uL15 (156 aa).

Over residues 1–13 the composition is skewed to basic and acidic residues; that stretch reads MKLNEIKDNEGAT. The tract at residues 1–39 is disordered; it reads MKLNEIKDNEGATKNRKRLGRGIGSGSGKTAGRGVKGQK. Residues 21–35 show a composition bias toward gly residues; it reads RGIGSGSGKTAGRGV.

The protein belongs to the universal ribosomal protein uL15 family. In terms of assembly, part of the 50S ribosomal subunit.

In terms of biological role, binds to the 23S rRNA. The protein is Large ribosomal subunit protein uL15 of Rhizobium meliloti (strain 1021) (Ensifer meliloti).